The sequence spans 460 residues: Flavonol 3-O-glucosyltransferase (460 aa).

Residue histidine 23 is the Proton acceptor of the active site. An anthocyanidin contacts are provided by histidine 23 and glutamine 88. The active-site Charge relay is aspartate 123. Position 145 (threonine 145) interacts with UDP-alpha-D-glucose. An anthocyanidin is bound at residue histidine 154. Alanine 339, glutamine 341, histidine 356, tryptophan 359, asparagine 360, serine 361, and glutamate 364 together coordinate UDP-alpha-D-glucose. An an anthocyanidin-binding site is contributed by glycine 379. UDP-alpha-D-glucose-binding residues include aspartate 380 and glutamine 381.

Belongs to the UDP-glycosyltransferase family.

It catalyses the reaction a flavonol + UDP-alpha-D-glucose = a flavonol 3-O-beta-D-glucoside + UDP + H(+). It carries out the reaction quercetin + UDP-alpha-D-glucose = quercetin 3-O-beta-D-glucoside + UDP + H(+). It functions in the pathway flavonoid metabolism. Functionally, flavonol 3-O-glucosyltransferase that catalyzes the transfer of glucose from UDP-glucose to the 3-OH position of quercetin and kaempferol. Possesses high quercetin 3-O-glucosyltransferase activity in vitro. Catalyzes the glycosylation of anthocyanins from UDP-glucose. Also active in vitro on benzoates and benzoate derivatives. The chain is Flavonol 3-O-glucosyltransferase from Arabidopsis thaliana (Mouse-ear cress).